Here is a 101-residue protein sequence, read N- to C-terminus: Small ribosomal subunit protein uS14A (101 aa).

Residues 28–57 (KDIIRSPSSAPEQRSTAQRALARQPRDASP) form a disordered region. Positions 33–45 (SPSSAPEQRSTAQ) are enriched in polar residues.

The protein belongs to the universal ribosomal protein uS14 family. As to quaternary structure, part of the 30S ribosomal subunit. Contacts proteins S3 and S10.

Binds 16S rRNA, required for the assembly of 30S particles and may also be responsible for determining the conformation of the 16S rRNA at the A site. The protein is Small ribosomal subunit protein uS14A of Mycobacterium bovis (strain ATCC BAA-935 / AF2122/97).